Here is a 325-residue protein sequence, read N- to C-terminus: Glutarate 2-hydroxylase (325 aa).

Fe cation is bound by residues His-160, Asp-162, and His-292.

Belongs to the glutarate hydroxylase family. Homotetramer. Requires Fe(2+) as cofactor.

It catalyses the reaction glutarate + 2-oxoglutarate + O2 = (S)-2-hydroxyglutarate + succinate + CO2. Its pathway is amino-acid degradation. Acts as an alpha-ketoglutarate-dependent dioxygenase catalyzing hydroxylation of glutarate (GA) to L-2-hydroxyglutarate (L2HG). Functions in a L-lysine degradation pathway that proceeds via cadaverine, glutarate and L-2-hydroxyglutarate. The sequence is that of Glutarate 2-hydroxylase from Salmonella typhimurium (strain SL1344).